Reading from the N-terminus, the 421-residue chain is Diaminopimelate decarboxylase (421 aa).

Lys62 bears the N6-(pyridoxal phosphate)lysine mark. Residues Gly237 and 279-282 (EPGR) contribute to the pyridoxal 5'-phosphate site. Arg282, Arg319, and Tyr323 together coordinate substrate. Residue Cys349 is the Proton donor of the active site. Glu350 and Tyr379 together coordinate substrate. Residue Tyr379 participates in pyridoxal 5'-phosphate binding.

The protein belongs to the Orn/Lys/Arg decarboxylase class-II family. LysA subfamily. Homodimer. Requires pyridoxal 5'-phosphate as cofactor.

The catalysed reaction is meso-2,6-diaminopimelate + H(+) = L-lysine + CO2. The protein operates within amino-acid biosynthesis; L-lysine biosynthesis via DAP pathway; L-lysine from DL-2,6-diaminopimelate: step 1/1. Its function is as follows. Specifically catalyzes the decarboxylation of meso-diaminopimelate (meso-DAP) to L-lysine. Plays a role in beta-lactam antibiotic resistance. In Staphylococcus aureus (strain COL), this protein is Diaminopimelate decarboxylase (lysA).